The primary structure comprises 375 residues: Protein RecA (375 aa).

88–95 contributes to the ATP binding site; the sequence is GPESSGKT.

This sequence belongs to the RecA family.

It localises to the cytoplasm. Functionally, can catalyze the hydrolysis of ATP in the presence of single-stranded DNA, the ATP-dependent uptake of single-stranded DNA by duplex DNA, and the ATP-dependent hybridization of homologous single-stranded DNAs. It interacts with LexA causing its activation and leading to its autocatalytic cleavage. The chain is Protein RecA from Rhodopirellula baltica (strain DSM 10527 / NCIMB 13988 / SH1).